Here is a 331-residue protein sequence, read N- to C-terminus: uncharacterized protein (331 aa).

Pentapeptide repeat domains follow at residues glutamate 50 to histidine 89, cysteine 90 to glycine 129, alanine 140 to glutamate 179, alanine 185 to glycine 224, and threonine 230 to glutamine 269.

This is an uncharacterized protein from Synechocystis sp. (strain ATCC 27184 / PCC 6803 / Kazusa).